A 256-amino-acid polypeptide reads, in one-letter code: Cysteine-rich repeat secretory protein 29 (256 aa).

Residues Met-1 to Ser-26 form the signal peptide. Gnk2-homologous domains follow at residues Tyr-33–Ser-136 and Tyr-142–Phe-253.

The protein belongs to the cysteine-rich repeat secretory protein family.

Its subcellular location is the secreted. The sequence is that of Cysteine-rich repeat secretory protein 29 (CRRSP29) from Arabidopsis thaliana (Mouse-ear cress).